A 97-amino-acid polypeptide reads, in one-letter code: Mitochondrial import inner membrane translocase subunit Tim8 A (97 aa).

The Twin CX3C motif motif lies at Cys43–Cys66. Intrachain disulfides connect Cys43–Cys66 and Cys47–Cys62. Residues Ser57, Ser87, Ser94, and Ser96 each carry the phosphoserine modification.

The protein belongs to the small Tim family. As to quaternary structure, heterohexamer; composed of 3 copies of TIMM8A and 3 copies of TIMM13, named soluble 70 kDa complex. Associates with the TIM22 complex, whose core is composed of TIMM22.

It is found in the mitochondrion inner membrane. Functionally, mitochondrial intermembrane chaperone that participates in the import and insertion of some multi-pass transmembrane proteins into the mitochondrial inner membrane. Also required for the transfer of beta-barrel precursors from the TOM complex to the sorting and assembly machinery (SAM complex) of the outer membrane. Acts as a chaperone-like protein that protects the hydrophobic precursors from aggregation and guide them through the mitochondrial intermembrane space. The TIMM8-TIMM13 complex mediates the import of proteins such as TIMM23, SLC25A12/ARALAR1 and SLC25A13/ARALAR2, while the predominant TIMM9-TIMM10 70 kDa complex mediates the import of much more proteins. The sequence is that of Mitochondrial import inner membrane translocase subunit Tim8 A (Timm8a) from Rattus norvegicus (Rat).